The sequence spans 554 residues: Zinc finger protein 426 (554 aa).

A KRAB domain is found at 42-112 (VTFDDVAVDF…QGGVLQGWEM (71 aa)). The C2H2-type 1; atypical zinc finger occupies 146–174 (CDCEQCGEVFSEHSCLKTHVRTQSTGNTH). 11 consecutive C2H2-type zinc fingers follow at residues 224–246 (FECS…MRTH), 280–302 (YKCK…MRTH), 308–330 (YECK…GRTH), 336–358 (YVCK…VRSH), 364–386 (YECK…IRTH), 392–414 (FVCV…LRTH), 420–442 (CECK…MRTH), 448–470 (YTCK…MRIH), 476–498 (YECK…ERTH), 504–526 (YECK…EKTH), and 532–554 (YKCQ…EQIH).

The protein localises to the nucleus. Its function is as follows. May be involved in transcriptional regulation. The chain is Zinc finger protein 426 (ZNF426) from Homo sapiens (Human).